Here is a 189-residue protein sequence, read N- to C-terminus: Glycerol-3-phosphate acyltransferase (189 aa).

5 helical membrane-spanning segments follow: residues methionine 1 to leucine 21, lysine 50 to alanine 70, leucine 77 to phenylalanine 97, methionine 111 to phenylalanine 131, and leucine 151 to valine 171.

It belongs to the PlsY family. Probably interacts with PlsX.

The protein resides in the cell inner membrane. The enzyme catalyses an acyl phosphate + sn-glycerol 3-phosphate = a 1-acyl-sn-glycero-3-phosphate + phosphate. Its pathway is lipid metabolism; phospholipid metabolism. Catalyzes the transfer of an acyl group from acyl-phosphate (acyl-PO(4)) to glycerol-3-phosphate (G3P) to form lysophosphatidic acid (LPA). This enzyme utilizes acyl-phosphate as fatty acyl donor, but not acyl-CoA or acyl-ACP. The polypeptide is Glycerol-3-phosphate acyltransferase (Pseudomonas putida (strain GB-1)).